The following is an 84-amino-acid chain: U8-theraphotoxin-Hhn1g (84 aa).

An N-terminal signal peptide occupies residues 1–21 (MKVVLLVCLVWMMAMMELVSC). Cystine bridges form between Cys-23/Cys-35, Cys-29/Cys-44, Cys-34/Cys-67, Cys-54/Cys-75, and Cys-69/Cys-81.

Belongs to the AVIT (prokineticin) family. As to expression, expressed by the venom gland.

Its subcellular location is the secreted. This is U8-theraphotoxin-Hhn1g from Cyriopagopus hainanus (Chinese bird spider).